Reading from the N-terminus, the 245-residue chain is Probable histone chaperone asf-1-like protein (245 aa).

Acidic residues predominate over residues Glu157–Glu166. The tract at residues Glu157 to His245 is disordered. Residues Glu167–Asp183 show a composition bias toward basic and acidic residues. Residues Gly184–Leu206 are compositionally biased toward acidic residues. Residues Ala215–His245 are compositionally biased toward basic and acidic residues.

Belongs to the ASF1 family. In terms of assembly, interacts with histone H3 and histone H4.

It is found in the nucleus. In terms of biological role, histone chaperone that facilitates histone deposition and histone exchange and removal during nucleosome assembly and disassembly. The chain is Probable histone chaperone asf-1-like protein (asfl-1) from Caenorhabditis elegans.